Here is a 360-residue protein sequence, read N- to C-terminus: Protein NDRG2 (360 aa).

The tract at residues 325-360 (RTASLSSEGNRSRSRTLSQSSESGGGPPAPLAEVTC) is disordered.

Belongs to the NDRG family.

The protein localises to the cytoplasm. Its function is as follows. Contributes to the regulation of the Wnt signaling pathway. Down-regulates CTNNB1-mediated transcriptional activation of target genes. May be involved in neuron differentiation. This is Protein NDRG2 from Xenopus tropicalis (Western clawed frog).